We begin with the raw amino-acid sequence, 1102 residues long: Voltage-gated delayed rectifier potassium channel KCNH8 (1102 aa).

Residues 1 to 225 lie on the Cytoplasmic side of the membrane; that stretch reads MPVMKGLLAP…HFSTFKAGWD (225 aa). One can recognise a PAS domain in the interval 18-90; it reads IATRFDGTHS…LQIEKSLEEK (73 aa). Positions 93–145 constitute a PAC domain; sequence FKGEIMFYKKNGAPFWCLLDIVPIKNEKGDVVLFLASFKDITDTKVKITSEDK. Residues 226-246 traverse the membrane as a helical segment; sequence WLILLATFYVAVTVPYNVCFI. Residues 247 to 255 are Extracellular-facing; it reads GNEDLSTTR. The chain crosses the membrane as a helical span at residues 256–276; the sequence is STTVSDIAVEILFIIDIILNF. Topologically, residues 277–298 are cytoplasmic; it reads RTTYVSKSGQVIFEARSICIHY. The helical transmembrane segment at 299-319 threads the bilayer; the sequence is VTTWFIIDLIAALPFDLLYAF. N-linked (GlcNAc...) asparagine glycosylation is present at asparagine 320. Residues 320-327 are Extracellular-facing; the sequence is NVTVVSLV. Residues 328-348 form a helical; Voltage-sensor membrane-spanning segment; sequence HLLKTVRLLRLLRLLQKLDRY. Over 349-353 the chain is Cytoplasmic; the sequence is SQHST. Residues 354–374 form a helical membrane-spanning segment; sequence IVLTLLMSMFALLAHWMACIW. Residues 375–419 are Extracellular-facing; it reads YVIGKMEREDNSLLKWEVGWLHELGKRLESPYYGNNTLGGPSIRS. Residue asparagine 409 is glycosylated (N-linked (GlcNAc...) asparagine). Positions 420–440 form an intramembrane region, pore-forming; sequence AYIAALYFTLSSLTSVGFGNV. The Selectivity filter signature appears at 434 to 439; the sequence is SVGFGN. At 441–448 the chain is on the extracellular side; that stretch reads SANTDAEK. The helical transmembrane segment at 449 to 469 threads the bilayer; that stretch reads IFSICTMLIGALMHALVFGNV. Residues 470–1102 are Cytoplasmic-facing; the sequence is TAIIQRMYSR…DVKDSKAINV (633 aa). Residues 551–668 are cNMP-binding domain; sequence LFECASRGCL…HKFVEDIQHD (118 aa). 4 disordered regions span residues 683-744, 762-793, 818-845, and 960-983; these read SRLS…KTGS, PFHSPIRVSSANSPKTKQEADPPNHGTRKEKN, EDGNSSEETQTFDFGSEQIRPEPRISPS, and LVGSNPQRTEAHEQSPVDSELHHS. Residues 710 to 723 are compositionally biased toward acidic residues; sequence VEDEEEEEVEEEET. Residues 777–793 are compositionally biased toward basic and acidic residues; sequence TKQEADPPNHGTRKEKN. Residues 968–982 show a composition bias toward basic and acidic residues; the sequence is TEAHEQSPVDSELHH.

The protein belongs to the potassium channel family. H (Eag) (TC 1.A.1.20) subfamily. Kv12.1/KCNH8 sub-subfamily. In terms of assembly, the potassium channel is probably composed of a homo- or heterotetrameric complex of pore-forming alpha subunits that can associate with modulating beta subunits. Detected in superior cervical, mesenteric and coeliac ganglia. Expressed in brain (piriform cortex, olfactory tubercle, cerebral cortex, hippocampus pyramidial cells and dentate gyrus and basal ganglia of caudate/putamen and accumbens nucleus). Expressed in pituitary.

The protein resides in the membrane. The enzyme catalyses K(+)(in) = K(+)(out). Its function is as follows. Pore-forming (alpha) subunit of a voltage-gated delayed rectifier potassium channel that mediates outward-rectifying potassium currents. Elicits a slowly activating, non-inactivating and slowly deactivation outwards potassium current at depolarizating voltages from -30 mV to +50mV. Shows no obvious change in the activation rate from different holding potentials. Activation is strongly dependent on the pH of the external solution. This is Voltage-gated delayed rectifier potassium channel KCNH8 from Rattus norvegicus (Rat).